Consider the following 118-residue polypeptide: Ly-6/neurotoxin-like protein 1 (118 aa).

The first 22 residues, 1 to 22 (MTPLLTLFLVVLMGLPLAPVQA), serve as a signal peptide directing secretion. The region spanning 23–107 (LDCHVCAYNG…LAIPATLALA (85 aa)) is the UPAR/Ly6 domain. Disulfide bonds link Cys25–Cys48, Cys28–Cys35, Cys41–Cys66, Cys70–Cys87, and Cys88–Cys93. The GPI-anchor amidated serine moiety is linked to residue Ser95. Positions 96-118 (AGLAIPATLALAPVLLATLWGLL) are cleaved as a propeptide — removed in mature form.

As to quaternary structure, interacts with nAChRs containing alpha-4:beta-2 (CHRNA4:CHRNB2) and alpha-7 (CHRNA7) subunits. Interacts with CHRNA4 probably in the endoplasmic reticulum prior to nAChR pentameric assembly. Interacts with KCNA2/Potassium voltage-gated channel subfamily A member 2. In terms of tissue distribution, expressed in lung predominantly in airway epithelial cells, submucous glands, and smooth muscle cells, in endothelial and smooth muscle cells in vessel walls and in alveolar type II cells (at protein level). Also expressed in brain.

Its subcellular location is the cell membrane. The protein localises to the cell projection. It localises to the dendrite. The protein resides in the endoplasmic reticulum. Functionally, acts in different tissues through interaction to nicotinic acetylcholine receptors (nAChRs). The proposed role as modulator of nAChR activity seems to be dependent on the nAChR subtype and stoichiometry, and to involve an effect on nAChR trafficking and its cell surface expression, and on single channel properties of the nAChR inserted in the plasma membrane. Modulates functional properties of nicotinic acetylcholine receptors (nAChRs) to prevent excessive excitation, and hence neurodegeneration. Enhances desensitization by increasing both the rate and extent of desensitization of alpha-4:beta-2-containing nAChRs and slowing recovery from desensitization. Promotes large amplitude ACh-evoked currents through alpha-4:beta-2 nAChRs. Is involved in regulation of the nAChR pentameric assembly in the endoplasmic reticulum. Shifts stoichiometry from high sensitivity alpha-4(2):beta-2(3) to low sensitivity alpha-4(3):beta-2(2) nAChR. In vitro modulates alpha-3:beta-4-containing nAChRs. Reduces cell surface expression of (alpha-3:beta-4)(2):beta-4 and (alpha-3:beta-4)(2):alpha-5 nAChRs suggesting an interaction with nAChR alpha-3(-):(+)beta-4 subunit interfaces and an allosteric mode. Corresponding single channel effects characterized by decreased unitary conductance, altered burst proportions and enhanced desensitization/inactivation seem to depend on nAChR alpha:alpha subunit interfaces and are greater in (alpha-3:beta-2)(2):alpha-3 when compared to (alpha-3:beta-2)(2):alpha-5 nAChRs. Prevents plasticity in the primary visual cortex late in life. The chain is Ly-6/neurotoxin-like protein 1 from Macaca mulatta (Rhesus macaque).